A 217-amino-acid chain; its full sequence is Adenylate kinase (217 aa).

ATP is bound at residue 10-15; sequence GAGKGT. An NMP region spans residues 30–59; sequence STGDMLRAAVKAGTPLGIEAKKVMDAGGLV. Residues threonine 31, arginine 36, 57-59, 85-88, and glutamine 92 contribute to the AMP site; these read GLV and GFPR. Residues 122–159 form an LID region; the sequence is GRRAHLASGRTYHVKYNPPKVEGKDDVTGEDLVQRDDD. ATP-binding positions include arginine 123 and 132–133; that span reads TY. AMP-binding residues include arginine 156 and arginine 167. Residue glycine 203 coordinates ATP.

It belongs to the adenylate kinase family. As to quaternary structure, monomer.

It is found in the cytoplasm. It carries out the reaction AMP + ATP = 2 ADP. Its pathway is purine metabolism; AMP biosynthesis via salvage pathway; AMP from ADP: step 1/1. In terms of biological role, catalyzes the reversible transfer of the terminal phosphate group between ATP and AMP. Plays an important role in cellular energy homeostasis and in adenine nucleotide metabolism. The sequence is that of Adenylate kinase from Azoarcus sp. (strain BH72).